Reading from the N-terminus, the 372-residue chain is DNA replication and repair protein RecF (372 aa).

30–37 is a binding site for ATP; it reads GENAQGKT.

Belongs to the RecF family.

It is found in the cytoplasm. Its function is as follows. The RecF protein is involved in DNA metabolism; it is required for DNA replication and normal SOS inducibility. RecF binds preferentially to single-stranded, linear DNA. It also seems to bind ATP. This is DNA replication and repair protein RecF from Geobacillus thermodenitrificans (strain NG80-2).